Consider the following 397-residue polypeptide: Phosphoglycerate kinase (397 aa).

Residues 21–23 (DVN), Arg36, 59–62 (HFGR), Arg119, and Arg152 contribute to the substrate site. ATP is bound by residues Lys202, Glu324, and 354–357 (GGDT).

This sequence belongs to the phosphoglycerate kinase family. In terms of assembly, monomer.

It is found in the cytoplasm. The catalysed reaction is (2R)-3-phosphoglycerate + ATP = (2R)-3-phospho-glyceroyl phosphate + ADP. It participates in carbohydrate degradation; glycolysis; pyruvate from D-glyceraldehyde 3-phosphate: step 2/5. The protein is Phosphoglycerate kinase of Cereibacter sphaeroides (strain KD131 / KCTC 12085) (Rhodobacter sphaeroides).